A 570-amino-acid chain; its full sequence is Repressible high-affinity phosphate permease (570 aa).

Topologically, residues 1-61 (MSTPQKTAGG…AVAGVGFFTD (61 aa)) are cytoplasmic. The helical transmembrane segment at 62-82 (SYDIFTVSLLTLMLGIVYFPG) threads the bilayer. Residues 83-95 (EGKMPTTSDTAIK) lie on the Extracellular side of the membrane. The helical transmembrane segment at 96-116 (LATSAGTVIGQVGFGAAADVF) threads the bilayer. Over 117-120 (GRKS) the chain is Cytoplasmic. The chain crosses the membrane as a helical span at residues 121–141 (MYGLELLFIIFATLAQALASG). Over 142–143 (SP) the chain is Extracellular. The helical transmembrane segment at 144 to 164 (SINIIGIIIFWRVLMGVGIGG) threads the bilayer. The Cytoplasmic portion of the chain corresponds to 165–186 (DYPLSSIITSEFATTKWRGAMM). A helical membrane pass occupies residues 187-207 (GAVFAMQGLGQLAAAFVMLFV). Topologically, residues 208–237 (TLGFKKSLEAAPTLASCTGDCAVAVDKMWR) are extracellular. The helical transmembrane segment at 238–258 (TVIGVGAVPGCIALYYRLTIP) threads the bilayer. At 259–325 (ETPRYTFDVK…FFRHYSKRKN (67 aa)) the chain is on the cytoplasmic side. The helical transmembrane segment at 326–346 (AMLLAGTALSWCFLDIAYYGV) threads the bilayer. Residues 347-374 (SLNNATILNVIGYSTTGAKNTYEILYNT) lie on the Extracellular side of the membrane. Residues 375-395 (AVGNLIIVLAGAVPGYWVTVF) traverse the membrane as a helical segment. At 396–403 (TVDTVGRK) the chain is on the cytoplasmic side. The chain crosses the membrane as a helical span at residues 404–424 (PIQFMGFGILTILFVVMGFAY). The Extracellular portion of the chain corresponds to 425-433 (KHLSPHALL). Residues 434 to 454 (AIFVLAQFFFNFGPNATTFIV) traverse the membrane as a helical segment. Residues 455 to 468 (PGEVFPTRYRSTSH) are Cytoplasmic-facing. The helical transmembrane segment at 469–489 (GLSAAMGKIGSIIGQGAIAPL) threads the bilayer. Topologically, residues 490 to 505 (RTRGAVKGGNPNPWMN) are extracellular. Residues 506–526 (HVLEIYALFMLLGVGTTFLIP) form a helical membrane-spanning segment. The Cytoplasmic segment spans residues 527-570 (ETKRKTLEELSGEFDMSGEEEAQRDTTLTEHKTEAPTSSAAVNA). Residues 537-546 (SGEFDMSGEE) show a composition bias toward acidic residues. A disordered region spans residues 537 to 570 (SGEFDMSGEEEAQRDTTLTEHKTEAPTSSAAVNA). A compositionally biased stretch (basic and acidic residues) spans 547–560 (EAQRDTTLTEHKTE). Polar residues predominate over residues 561–570 (APTSSAAVNA).

This sequence belongs to the major facilitator superfamily. Sugar transporter (TC 2.A.1.1) family.

Its subcellular location is the cell membrane. With respect to regulation, phosphate transport activity is competitively inhibited by arsenate. In terms of biological role, high-affinity transporter for external inorganic phosphate. Acts probably as a H(+)-phosphate symporter. The sequence is that of Repressible high-affinity phosphate permease from Neurospora crassa (strain ATCC 24698 / 74-OR23-1A / CBS 708.71 / DSM 1257 / FGSC 987).